Consider the following 246-residue polypeptide: Carboxylesterase (246 aa).

S93 acts as the Nucleophile in catalysis. Catalysis depends on charge relay system residues D192 and H222.

This sequence belongs to the lipase/esterase LIP3/BchO family. As to quaternary structure, homodimer.

The enzyme catalyses a carboxylic ester + H2O = an alcohol + a carboxylate + H(+). Involved in the detoxification of xenobiotics. Shows maximal activity with C6 substrates, with gradually decreasing activity from C8 to C12 substrates. No activity for higher chain length substrates acids rather than long-chain ones. The polypeptide is Carboxylesterase (est) (Geobacillus stearothermophilus (Bacillus stearothermophilus)).